A 245-amino-acid polypeptide reads, in one-letter code: Ribonuclease PH (245 aa).

Residues Arg-86 and 124–126 contribute to the phosphate site; that span reads GTR.

The protein belongs to the RNase PH family. In terms of assembly, homohexameric ring arranged as a trimer of dimers. It has been suggested that the active form is the dimer which binds tRNA and that the hexameric form protects the substrate recognition loop (approximately residues 65-82) from proteolysis.

The catalysed reaction is tRNA(n+1) + phosphate = tRNA(n) + a ribonucleoside 5'-diphosphate. Phosphorolytic 3'-5' exoribonuclease that plays an important role in tRNA 3'-end maturation. Removes nucleotide residues following the 3'-CCA terminus of tRNAs; can also add nucleotides to the ends of RNA molecules by using nucleoside diphosphates as substrates, but this may not be physiologically important. Probably plays a role in initiation of 16S rRNA degradation (leading to ribosome degradation) during starvation. Plays a role in the secondary pathway of 23S rRNA 3' end maturation. The sequence is that of Ribonuclease PH from Bacillus subtilis (strain 168).